The chain runs to 200 residues: A-type ATP synthase subunit E (200 aa).

This sequence belongs to the V-ATPase E subunit family. Has multiple subunits with at least A(3), B(3), C, D, E, F, H, I and proteolipid K(x).

Its subcellular location is the cell membrane. Component of the A-type ATP synthase that produces ATP from ADP in the presence of a proton gradient across the membrane. This is A-type ATP synthase subunit E from Methanopyrus kandleri (strain AV19 / DSM 6324 / JCM 9639 / NBRC 100938).